A 557-amino-acid polypeptide reads, in one-letter code: Formate--tetrahydrofolate ligase (557 aa).

66–73 (TPAGEGKT) is a binding site for ATP.

It belongs to the formate--tetrahydrofolate ligase family.

The catalysed reaction is (6S)-5,6,7,8-tetrahydrofolate + formate + ATP = (6R)-10-formyltetrahydrofolate + ADP + phosphate. The protein operates within one-carbon metabolism; tetrahydrofolate interconversion. This is Formate--tetrahydrofolate ligase from Bartonella tribocorum (strain CIP 105476 / IBS 506).